Here is a 229-residue protein sequence, read N- to C-terminus: ATP-dependent dethiobiotin synthetase BioD (229 aa).

12–17 (GVGKTV) contributes to the ATP binding site. Threonine 16 contacts Mg(2+). Lysine 37 is an active-site residue. Residue threonine 41 participates in substrate binding. Residues aspartate 53, 112-115 (EGAG), and 201-203 (PAG) contribute to the ATP site. Mg(2+) contacts are provided by aspartate 53 and glutamate 112.

This sequence belongs to the dethiobiotin synthetase family. In terms of assembly, homodimer. It depends on Mg(2+) as a cofactor.

The protein resides in the cytoplasm. The catalysed reaction is (7R,8S)-7,8-diammoniononanoate + CO2 + ATP = (4R,5S)-dethiobiotin + ADP + phosphate + 3 H(+). It participates in cofactor biosynthesis; biotin biosynthesis; biotin from 7,8-diaminononanoate: step 1/2. Catalyzes a mechanistically unusual reaction, the ATP-dependent insertion of CO2 between the N7 and N8 nitrogen atoms of 7,8-diaminopelargonic acid (DAPA, also called 7,8-diammoniononanoate) to form a ureido ring. The sequence is that of ATP-dependent dethiobiotin synthetase BioD from Mycobacterium sp. (strain KMS).